The chain runs to 40 residues: U12-ctenitoxin-Co1a (40 aa).

4 disulfides stabilise this stretch: C2/C16, C9/C22, C15/C31, and C24/C29.

Expressed by the venom gland.

Its subcellular location is the secreted. Its function is as follows. Insecticidal neurotoxin that reversibly inhibits the N-methyl-D-aspartate (NMDA)-subtype of ionotropic glutamate receptor (GRIN) and inhibits inactivation of insect sodium channels (Nav). In vivo, is highly toxic to insects. The chain is U12-ctenitoxin-Co1a from Ctenus ornatus (Brazilian spider).